We begin with the raw amino-acid sequence, 228 residues long: U1 small nuclear ribonucleoprotein C (228 aa).

A Matrin-type; degenerate zinc finger spans residues 11–43 (ATVDYCDIFLTHDSASVRKAHNTGWKHKMQVEH). The segment at 83 to 127 (GQRGQPVGGPPRPPQPFHNGGRPGPPGRPPMGMFPPQRPMMPPPH) is disordered. Positions 105–127 (PGPPGRPPMGMFPPQRPMMPPPH) are enriched in pro residues.

It belongs to the U1 small nuclear ribonucleoprotein C family. As to quaternary structure, U1 snRNP is composed of the 7 core Sm proteins B/B', D1, D2, D3, E, F and G that assemble in a heptameric protein ring on the Sm site of the small nuclear RNA to form the core snRNP, and at least 3 U1 snRNP-specific proteins U1-70K, U1-A and U1-C. U1-C interacts with U1 snRNA and the 5' splice-site region of the pre-mRNA.

Its subcellular location is the nucleus. Component of the spliceosomal U1 snRNP, which is essential for recognition of the pre-mRNA 5' splice-site and the subsequent assembly of the spliceosome. U1-C is directly involved in initial 5' splice-site recognition for both constitutive and regulated alternative splicing. The interaction with the 5' splice-site seems to precede base-pairing between the pre-mRNA and the U1 snRNA. Stimulates commitment or early (E) complex formation by stabilizing the base pairing of the 5' end of the U1 snRNA and the 5' splice-site region. This Batrachochytrium dendrobatidis (strain JAM81 / FGSC 10211) (Frog chytrid fungus) protein is U1 small nuclear ribonucleoprotein C.